Consider the following 442-residue polypeptide: NALCN channel auxiliary factor 2 (442 aa).

A helical membrane pass occupies residues 42 to 62 (LASLLFFTVLLSNHLWLVSAG). N-linked (GlcNAc...) asparagine glycans are attached at residues asparagine 77, asparagine 100, asparagine 171, asparagine 279, and asparagine 354. A helical membrane pass occupies residues 406–426 (CVLVLMLLHTMASFSVVQNGV).

The protein belongs to the NALF family.

It is found in the membrane. In terms of biological role, probable component of the NALCN channel complex, a channel that regulates the resting membrane potential and controls neuronal excitability. The sequence is that of NALCN channel auxiliary factor 2 (nalf2) from Xenopus tropicalis (Western clawed frog).